A 366-amino-acid chain; its full sequence is Putative amino-acid transporter MJ1196 (366 aa).

11 helical membrane passes run 14–34, 37–57, 87–107, 111–131, 141–161, 173–193, 205–225, 247–267, 291–311, 314–334, and 346–366; these read ITSIVGGGIFVLSPLTYLLFG, IIWGWALLIFVSLIMASPFAY, ILWLSGVFALSGVVSFFEIVF, FNVSYVGLCLIVILTALILGG, IFGILTITIILYIVFSNGIKI, ILTIYFGLWTATGWEGITMPL, GLLVGTFIIGVLYLLFSLTIV, FLLAGMLLIISSCAFSVLFTL, IPYYGVILNTLLVIILLIFDA, LVDMSMFSTLIAYFLLYLAVF, and LISMLITGLLILFRVYNFIIL.

This sequence belongs to the amino acid-polyamine-organocation (APC) superfamily.

It localises to the cell membrane. In Methanocaldococcus jannaschii (strain ATCC 43067 / DSM 2661 / JAL-1 / JCM 10045 / NBRC 100440) (Methanococcus jannaschii), this protein is Putative amino-acid transporter MJ1196.